The chain runs to 205 residues: Probable GTP-binding protein EngB (205 aa).

The EngB-type G domain maps to 27–201 (EGMEIAFAGR…AAKLDSWFSS (175 aa)). GTP is bound by residues 35 to 42 (GRSNAGKS), 62 to 66 (GRTQL), 80 to 83 (DLPG), 147 to 150 (TKAD), and 180 to 182 (FSA). Residues S42 and T64 each coordinate Mg(2+).

The protein belongs to the TRAFAC class TrmE-Era-EngA-EngB-Septin-like GTPase superfamily. EngB GTPase family. Requires Mg(2+) as cofactor.

In terms of biological role, necessary for normal cell division and for the maintenance of normal septation. This is Probable GTP-binding protein EngB from Mannheimia succiniciproducens (strain KCTC 0769BP / MBEL55E).